A 380-amino-acid chain; its full sequence is Protein-tyrosine sulfotransferase A (380 aa).

Topologically, residues 1–6 (MRKNRE) are cytoplasmic. Residues 7 to 27 (LLLVLFLVVFILFYFITARTA) form a helical; Signal-anchor for type II membrane protein membrane-spanning segment. Residues 28-380 (DDPYYSNHRE…PIVDNEVSKL (353 aa)) lie on the Lumenal side of the membrane. N-linked (GlcNAc...) asparagine glycosylation is present at Asn-66. 79–83 (RSGTT) is a 3'-phosphoadenylyl sulfate binding site. Cys-97 and Cys-157 are joined by a disulfide. Catalysis depends on Glu-100, which acts as the Proton donor/acceptor. The interval 102-106 (RVIPR) is interaction with peptide substrate. Residues Arg-184, Ser-192, and Arg-196 each contribute to the 3'-phosphoadenylyl sulfate site. Cys-226 and Cys-234 are joined by a disulfide. Residues Tyr-239, 284–293 (SSDQVVKPVN), and Lys-299 contribute to the 3'-phosphoadenylyl sulfate site.

This sequence belongs to the protein sulfotransferase family.

Its subcellular location is the golgi apparatus membrane. It carries out the reaction L-tyrosyl-[protein] + 3'-phosphoadenylyl sulfate = O-sulfo-L-tyrosine-[protein] + adenosine 3',5'-bisphosphate + H(+). Its function is as follows. Catalyzes the O-sulfation of tyrosine residues within acidic motifs of polypeptides, using 3'-phosphoadenylyl sulfate (PAPS) as cosubstrate. This is Protein-tyrosine sulfotransferase A (tpst-1) from Caenorhabditis elegans.